The sequence spans 353 residues: Peptide chain release factor 1 (353 aa).

N5-methylglutamine is present on Gln-230.

Belongs to the prokaryotic/mitochondrial release factor family. In terms of processing, methylated by PrmC. Methylation increases the termination efficiency of RF1.

It localises to the cytoplasm. Its function is as follows. Peptide chain release factor 1 directs the termination of translation in response to the peptide chain termination codons UAG and UAA. The polypeptide is Peptide chain release factor 1 (Gluconobacter oxydans (strain 621H) (Gluconobacter suboxydans)).